The chain runs to 857 residues: Inactive rhomboid protein 1 (857 aa).

Residues 1–413 (MAELRRDSTS…HRPFFTYWIT (413 aa)) lie on the Cytoplasmic side of the membrane. The segment at 283-307 (FESPSDSTMKDVDSKQLDESELTGS) is disordered. Positions 290-300 (TMKDVDSKQLD) are enriched in basic and acidic residues. A helical transmembrane segment spans residues 414-434 (FVHILITILAVCIYGIAPVGF). At 435–661 (SQHETVDSVL…PDQFYRLWLS (227 aa)) the chain is on the lumenal side. A glycan (N-linked (GlcNAc...) asparagine) is linked at Asn585. The chain crosses the membrane as a helical span at residues 662–682 (LFLHAGILHCLVSVCFQMTIL). The Cytoplasmic portion of the chain corresponds to 683 to 693 (RDLEKLAGWLR). A helical transmembrane segment spans residues 694 to 714 (ISIIYILSGITGNLASAIFLP). At 715 to 716 (YR) the chain is on the lumenal side. Residues 717–737 (AEVGPAGSQFGILACLFVELI) traverse the membrane as a helical segment. At 738-748 (QSWQILAQPWR) the chain is on the cytoplasmic side. Residues 749–769 (AFTKLLCVVLFLFAFGLLPWI) form a helical membrane-spanning segment. Residues 770 to 774 (DNFAH) are Lumenal-facing. Residues 775–795 (ISGFISGFFLSFAFLPYISFG) traverse the membrane as a helical segment. Topologically, residues 796-805 (RLDMYRKRCQ) are cytoplasmic. A helical transmembrane segment spans residues 806 to 826 (IIIFLVVFLGLFAGLVVLFYV). At 827-857 (HPIKCEWCELLTCIPFTDKFCEKYDLNAHLH) the chain is on the lumenal side.

Belongs to the peptidase S54 family.

The protein localises to the endoplasmic reticulum membrane. It localises to the golgi apparatus membrane. Its function is as follows. Regulates ADAM17 protease, a sheddase of the epidermal growth factor (EGF) receptor ligands and TNF, thereby plays a role in sleep, cell survival, proliferation, migration and inflammation. Does not exhibit any protease activity on its own. This is Inactive rhomboid protein 1 (rhbdf1) from Danio rerio (Zebrafish).